We begin with the raw amino-acid sequence, 325 residues long: 6-hydroxymellein 5-farnesyltransferase cdmH (325 aa).

Helical transmembrane passes span 60-80 (ASIL…GAAG), 113-133 (AFTW…AMLG), 138-158 (WPFM…KRPI), 169-189 (LLGI…YGPC), and 192-212 (ISEI…WSFY). Residue Asn214 is glycosylated (N-linked (GlcNAc...) asparagine). A run of 3 helical transmembrane segments spans residues 243–263 (ALLA…LRPF), 267–287 (WLWL…LLSF), and 295–315 (GGVL…ACTL).

Belongs to the UbiA prenyltransferase family. Mg(2+) is required as a cofactor.

The protein localises to the membrane. The catalysed reaction is 6-hydroxymellein + (2E,6E)-farnesyl diphosphate = verruculide C + diphosphate. It participates in secondary metabolite biosynthesis; terpenoid biosynthesis. In terms of biological role, 6-hydroxymellein 5-farnesyltransferase; part of the gene cluster that mediates the biosynthesis of chrodrimanin B, a meroterpenoid that acts as a potent blocker of insect GABA-gated chloride channels. The first step of the pathway is the biosynthesis of 6-hydroxymellein by the polyketide synthase cdmE. The prenyltransferase cdmH acts as a 6-hydroxymellein 5-farnesyltransferase and produces the hydrophobic metabolite verruculide C. The FAD-dependent monooxygenase cdmI further converts verruculide C into verruculide B. The terpene cyclase cdmG then produced the pentacyclic molecule 3-hydroxypentacecilide A, the backbone structure of chrodrimanin B, via folding the farnesyl moiety of the substrate into the chair-boat conformation. The short-chain dehydrogenase/reductase cdmF functions as the 3-OH dehydrogenase that oxidizes the C-3 hydroxyl group of 3-hydroxypentacecilide A and produces chrodrimanin C, the dehydrogenated product of 3-hydroxypentacecilide A. The cytochrome P450 monooxygenase cdmJ then accepts both 3-hydroxypentacecilide A and chrodrimanin C and functions as a C-7-beta-hydroxylase to produce respectively chrodrimanin H and chrodrimanin F. The dioxygenase cdmA accepts chrodrimanin H to afford chrodrimanin E, which is further transformed to chrodrimanin A by the dioxygenase cdmD. CdmA can also accept chrodrimanin C as substrate to convert it into verruculide A, which is further converted into chrodrimanin T by cdmD. The last step of the biosynthesis is proposed to be performed by the acetyltransferase cdmC which acetylates chrodrimanin A to yield chrodrimanin B. The pathway may also lead to the production of additional shunt products, including chrodrimanins T and U. The chain is 6-hydroxymellein 5-farnesyltransferase cdmH from Talaromyces verruculosus (Penicillium verruculosum).